The chain runs to 462 residues: C4-dicarboxylate transport transcriptional regulatory protein DctD (462 aa).

One can recognise a Response regulatory domain in the interval 12-126; sequence QVLLIDDDPH…ALLDSVRRAL (115 aa). Asp-61 carries the post-translational modification 4-aspartylphosphate. Residues 152–381 form the Sigma-54 factor interaction domain; sequence LIGRSAGMQR…LQNAAERFAL (230 aa). ATP contacts are provided by residues 180-187 and 243-252; these read GETGAGKE and ANGGTLFLDE.

Phosphorylated by DctB.

Functionally, member of the two-component regulatory system DctB/DctD, which regulates C4-dicarboxylate transport via regulation of expression of the dctPQM operon and dctA. The chain is C4-dicarboxylate transport transcriptional regulatory protein DctD from Pseudomonas aeruginosa (strain ATCC 15692 / DSM 22644 / CIP 104116 / JCM 14847 / LMG 12228 / 1C / PRS 101 / PAO1).